The chain runs to 166 residues: uncharacterized protein (166 aa).

Residues 2–82 enclose the GIY-YIG domain; that stretch reads DNWVCYLIMS…KRLSKKRNIQ (81 aa). Residues 23-43 are disordered; that stretch reads NNRQRRLNDHNNLNPSRKGAK.

This is an uncharacterized protein from Acanthamoeba polyphaga mimivirus (APMV).